Reading from the N-terminus, the 398-residue chain is E3 ubiquitin-protein ligase MARCHF11 (398 aa).

The span at 1 to 14 shows a compositional bias: basic and acidic residues; the sequence is MSDEGSKRGSRADS. A disordered region spans residues 1-158; sequence MSDEGSKRGS…GSGDQRSGHQ (158 aa). Residues 19 to 31 show a composition bias toward pro residues; that stretch reads PPLPPPPPPPPPG. 2 stretches are compositionally biased toward basic and acidic residues: residues 94–104 and 121–130; these read EGPRRLPEVKL and ACREGERRGT. The RING-CH-type zinc-finger motif lies at 158 to 218; that stretch reads QHQHHQPICK…ELCCYRYHVT (61 aa). Zn(2+)-binding residues include C166, C169, C182, C184, H192, C195, C208, and C211. 2 helical membrane-spanning segments follow: residues 241–261 and 274–294; these read MIAVILGSLFLIASVTWLLWS and ILFQICYGMYGFMDLVCIGLI. The short motif at 367-370 is the YXXL motif element; it reads YVLL. The short motif at 395–398 is the PDZ-binding element; it reads VTSV.

Interacts (YXXL motif) with AP1M1. Interacts (via PDZ-binding motif) with LIN7A. Interacts with unidentified fucose glycoproteins. In terms of tissue distribution, predominantly expressed in testis. Present in early developing spermatids. Not present in spermatogonia, spermatocytes or somatic cells (i.e. peritubular, Leydig, and Sertoli cells). Present in early round spermatids at step 4, remains until step 11, then it decreases at steps 12-15, and diminishes after step 16 (at protein level). Also expressed at lower level in brain.

Its subcellular location is the cytoplasmic vesicle membrane. The catalysed reaction is S-ubiquitinyl-[E2 ubiquitin-conjugating enzyme]-L-cysteine + [acceptor protein]-L-lysine = [E2 ubiquitin-conjugating enzyme]-L-cysteine + N(6)-ubiquitinyl-[acceptor protein]-L-lysine.. It functions in the pathway protein modification; protein ubiquitination. E3 ubiquitin-protein ligase that mediates polyubiquitination of CD4. E3 ubiquitin ligases accept ubiquitin from an E2 ubiquitin-conjugating enzyme in the form of a thioester and then directly transfer the ubiquitin to targeted substrates. May play a role in ubuquitin-dependent protein sorting in developmenting spermatids. This is E3 ubiquitin-protein ligase MARCHF11 (Marchf11) from Rattus norvegicus (Rat).